Consider the following 843-residue polypeptide: Protein P (843 aa).

A terminal protein domain (TP) region spans residues 1–177 (MPLSYQHFRR…FCGSPYSWEQ (177 aa)). Residues 178–346 (ELQHGSTSLN…YCLSHIINLL (169 aa)) form a spacer region. The interval 228-316 (KQGQLANGKQ…VPPSTVGSES (89 aa)) is disordered. Polar residues-rich tracts occupy residues 262 to 276 (TGHSDNLATRSTSRF), 286 to 299 (NPSLSTSKGHTSTG), and 307 to 316 (VPPSTVGSES). Positions 347–690 (EDWGPCYEHG…YMNLYPVARQ (344 aa)) are polymerase/reverse transcriptase domain (RT). Residues 357-600 (EHHIRTPRTP…YSLHFMGYII (244 aa)) form the Reverse transcriptase domain. 3 residues coordinate Mg(2+): Asp429, Asp551, and Asp552.

The protein belongs to the hepadnaviridae P protein family.

The enzyme catalyses DNA(n) + a 2'-deoxyribonucleoside 5'-triphosphate = DNA(n+1) + diphosphate. It carries out the reaction Endonucleolytic cleavage to 5'-phosphomonoester.. Activated by host HSP70 and HSP40 in vitro to be able to bind the epsilon loop of the pgRNA. Because deletion of the RNase H region renders the protein partly chaperone-independent, the chaperones may be needed indirectly to relieve occlusion of the RNA-binding site by this domain. Inhibited by several reverse-transcriptase inhibitors: Lamivudine, Adefovir and Entecavir. In terms of biological role, multifunctional enzyme that converts the viral RNA genome into dsDNA in viral cytoplasmic capsids. This enzyme displays a DNA polymerase activity that can copy either DNA or RNA templates, and a ribonuclease H (RNase H) activity that cleaves the RNA strand of RNA-DNA heteroduplexes in a partially processive 3'- to 5'-endonucleasic mode. Neo-synthesized pregenomic RNA (pgRNA) are encapsidated together with the P protein, and reverse-transcribed inside the nucleocapsid. Initiation of reverse-transcription occurs first by binding the epsilon loop on the pgRNA genome, and is initiated by protein priming, thereby the 5'-end of (-)DNA is covalently linked to P protein. Partial (+)DNA is synthesized from the (-)DNA template and generates the relaxed circular DNA (RC-DNA) genome. After budding and infection, the RC-DNA migrates in the nucleus, and is converted into a plasmid-like covalently closed circular DNA (cccDNA). The activity of P protein does not seem to be necessary for cccDNA generation, and is presumably released from (+)DNA by host nuclear DNA repair machinery. The protein is Protein P of Homo sapiens (Human).